The sequence spans 376 residues: 23S rRNA (uracil(747)-C(5))-methyltransferase RlmC (376 aa).

The [4Fe-4S] cluster site is built by Cys3, Cys11, Cys14, and Cys87. S-adenosyl-L-methionine is bound by residues Gln212, Phe241, Glu262, and Asn307. The active-site Nucleophile is Cys334.

It belongs to the class I-like SAM-binding methyltransferase superfamily. RNA M5U methyltransferase family. RlmC subfamily.

The catalysed reaction is uridine(747) in 23S rRNA + S-adenosyl-L-methionine = 5-methyluridine(747) in 23S rRNA + S-adenosyl-L-homocysteine + H(+). Functionally, catalyzes the formation of 5-methyl-uridine at position 747 (m5U747) in 23S rRNA. This is 23S rRNA (uracil(747)-C(5))-methyltransferase RlmC from Salmonella choleraesuis (strain SC-B67).